The chain runs to 360 residues: Peptide chain release factor 1 (360 aa).

Gln235 is subject to N5-methylglutamine. Residues 284 to 313 (AKRQQAEASTRRNLLGSGDRSDRNRTYNFP) are disordered.

It belongs to the prokaryotic/mitochondrial release factor family. In terms of processing, methylated by PrmC. Methylation increases the termination efficiency of RF1.

It localises to the cytoplasm. Peptide chain release factor 1 directs the termination of translation in response to the peptide chain termination codons UAG and UAA. The chain is Peptide chain release factor 1 from Salmonella schwarzengrund (strain CVM19633).